The primary structure comprises 317 residues: Hairy/enhancer-of-split related with YRPW motif protein 1 (317 aa).

The disordered stretch occupies residues 1 to 59 (MKRNHDFSSSDSELDENIEVEKESADENAGANSPLGSMSPSTTSQVQARKRRRGIIEKR). A compositionally biased stretch (polar residues) spans 30-47 (GANSPLGSMSPSTTSQVQ). The bHLH domain occupies 48–103 (ARKRRRGIIEKRRRDRINNSLSELRRLVPSAFEKQGSAKLEKAEILQMTVDHLKML). The Orange domain occupies 121–157 (YRGLGFRECLAETARYLSIIEGLDNTDPLRIRLVSHL). Low complexity-rich tracts occupy residues 193-226 (QQQQ…SAPS) and 248-264 (PPST…TASK). Positions 193 to 264 (QQQQQQGAPL…PGLTPPTASK (72 aa)) are disordered. Positions 307 to 310 (YRPW) match the YRPW motif motif.

It belongs to the HEY family.

Its subcellular location is the nucleus. In terms of biological role, transcriptional repressor which functions as a downstream effector of Notch signaling. This chain is Hairy/enhancer-of-split related with YRPW motif protein 1 (hey1), found in Danio rerio (Zebrafish).